A 166-amino-acid chain; its full sequence is Protein-export protein SecB (166 aa).

Belongs to the SecB family. Homotetramer, a dimer of dimers. One homotetramer interacts with 1 SecA dimer.

It is found in the cytoplasm. In terms of biological role, one of the proteins required for the normal export of preproteins out of the cell cytoplasm. It is a molecular chaperone that binds to a subset of precursor proteins, maintaining them in a translocation-competent state. It also specifically binds to its receptor SecA. This chain is Protein-export protein SecB, found in Cereibacter sphaeroides (strain ATCC 17029 / ATH 2.4.9) (Rhodobacter sphaeroides).